Reading from the N-terminus, the 695-residue chain is Glycine--tRNA ligase beta subunit (695 aa).

This sequence belongs to the class-II aminoacyl-tRNA synthetase family. In terms of assembly, tetramer of two alpha and two beta subunits.

The protein localises to the cytoplasm. The catalysed reaction is tRNA(Gly) + glycine + ATP = glycyl-tRNA(Gly) + AMP + diphosphate. The polypeptide is Glycine--tRNA ligase beta subunit (Lawsonia intracellularis (strain PHE/MN1-00)).